The chain runs to 816 residues: H(+)/Cl(-) exchange transporter 5 (816 aa).

The Cytoplasmic segment spans residues 1–124 (MAMWQGAMDN…WALIHSVSDA (124 aa)). The next 2 helical transmembrane spans lie at 125 to 162 (FSGW…ICTG) and 208 to 231 (VNYF…VKAF). A Selectivity filter part_1 motif is present at residues 237-241 (GSGIP). Chloride is bound at residue serine 238. An intramembrane region (helical) is located at residues 240–247 (IPEIKTIL). The next 2 membrane-spanning stretches (helical) occupy residues 256–275 (LGKW…VSSG) and 281–300 (EGPL…HCFN). The Selectivity filter part_2 motif lies at 279 to 283 (GKEGP). 2 consecutive intramembrane regions (helical) follow at residues 312–324 (VLSA…VSVA) and 328–336 (PIGGVLFSL). 5 helical membrane-spanning segments follow: residues 348–366 (LWRS…RSIN), 389–414 (LVPF…IAWC), 422–442 (LGKY…ILAF), 498–518 (MWQL…TFGM), and 523–542 (GLFI…LGVG). Residues 523–527 (GLFIP) carry the Selectivity filter part_3 motif. Residue phenylalanine 525 coordinates chloride. Positions 570–584 (GLYAMVGAAACLGGV) form an intramembrane region, helical. Positions 585–587 (TRM) form an intramembrane region, note=Loop between two helices. An intramembrane region (helical) is located at residues 588-599 (TVSLVVIMFELT). Residues 600-604 (GGLEY) constitute an intramembrane region (note=Loop between two helices). A helical membrane pass occupies residues 605 to 622 (IVPLMAAAMTSKWVADAL). Topologically, residues 623-816 (GREGIYDAHI…NQDPDSILFN (194 aa)) are cytoplasmic. A chloride-binding site is contributed by tyrosine 628. 2 CBS domains span residues 656–720 (MKPR…ARKK) and 752–812 (ILDL…DPDS). ATP contacts are provided by residues threonine 666, 687 to 689 (YSG), and 794 to 797 (TKKD).

Belongs to the chloride channel (TC 2.A.49) family. ClC-5/CLCN5 subfamily. Interacts with NEDD4 and NEDD4L. Ubiquitinated by NEDD4L in the presence of albumin; which promotes endocytosis and proteasomal degradation. In terms of tissue distribution, kidney specific.

It localises to the golgi apparatus membrane. It is found in the endosome membrane. The protein resides in the cell membrane. It carries out the reaction 2 chloride(in) + H(+)(out) = 2 chloride(out) + H(+)(in). In terms of biological role, proton-coupled chloride transporter. Functions as antiport system and exchanges chloride ions against protons. Important for normal acidification of the endosome lumen. May play an important role in renal tubular function. The CLC channel family contains both chloride channels and proton-coupled anion transporters that exchange chloride or another anion for protons. The absence of conserved gating glutamate residues is typical for family members that function as channels. This is H(+)/Cl(-) exchange transporter 5 (Clcn5) from Mus musculus (Mouse).